The primary structure comprises 148 residues: Deoxyuridine 5'-triphosphate nucleotidohydrolase (148 aa).

Substrate is bound by residues 67–69 (RSG), Asn80, 84–86 (LID), and Met94.

Belongs to the dUTPase family. The cofactor is Mg(2+).

The catalysed reaction is dUTP + H2O = dUMP + diphosphate + H(+). It participates in pyrimidine metabolism; dUMP biosynthesis; dUMP from dCTP (dUTP route): step 2/2. Its function is as follows. This enzyme is involved in nucleotide metabolism: it produces dUMP, the immediate precursor of thymidine nucleotides and it decreases the intracellular concentration of dUTP so that uracil cannot be incorporated into DNA. The sequence is that of Deoxyuridine 5'-triphosphate nucleotidohydrolase from Burkholderia thailandensis (strain ATCC 700388 / DSM 13276 / CCUG 48851 / CIP 106301 / E264).